Reading from the N-terminus, the 316-residue chain is Ribosomal RNA small subunit methyltransferase H (316 aa).

S-adenosyl-L-methionine contacts are provided by residues 32 to 34, Asp-52, Phe-79, Asp-100, and Gln-107; that span reads AGH.

It belongs to the methyltransferase superfamily. RsmH family.

The protein resides in the cytoplasm. The catalysed reaction is cytidine(1402) in 16S rRNA + S-adenosyl-L-methionine = N(4)-methylcytidine(1402) in 16S rRNA + S-adenosyl-L-homocysteine + H(+). Its function is as follows. Specifically methylates the N4 position of cytidine in position 1402 (C1402) of 16S rRNA. The protein is Ribosomal RNA small subunit methyltransferase H of Lysinibacillus sphaericus (strain C3-41).